The sequence spans 254 residues: Low affinity immunoglobulin gamma Fc region receptor III-A (254 aa).

The N-terminal stretch at 1–16 is a signal peptide; the sequence is MWQLLLPTALLLLVSA. Residues 17 to 208 are Extracellular-facing; the sequence is GMRAEDLPKA…ISSFFPPGYQ (192 aa). Ig-like C2-type domains lie at 24-105 and 107-189; these read PKAV…LEVH and GWLL…VNIT. Intrachain disulfides connect C47/C89 and C128/C172. N-linked (GlcNAc...) asparagine glycosylation is found at N56, N63, and N82. N180 and N187 each carry an N-linked (GlcNAc...) asparagine glycan. A helical transmembrane segment spans residues 209-229; the sequence is VSFCLVMVLLFAVDTGLYFSM. The Cytoplasmic segment spans residues 230-254; it reads KKSIPSSTRDWEDHKFKWSKDPQDK.

In terms of assembly, forms a heterooligomeric complex with ITAM-containing signaling subunits, either a homodimer of CD247, a homodimer of FCER1G or a heterodimer of CD247 and FCER1G. Interacts (via transmembrane domain) with signaling subunits; this interaction is a prerequisite for receptor complex expression on the cell surface and intracellular signal transduction. Binds the Fc region of antigen-complexed IgG with a preference for IgG1 and IgG3 isotypes. Interacts with CD2; this interaction is involved in NK cell activation and cytotoxicity. Interacts with S100A4; this interaction inhibits PKC-dependent phosphorylation of FCGR3A. In terms of processing, glycosylated. Glycosylation plays an inhibitory role in the interaction with IgG1 and IgG2. Post-translationally, undergoes rapid ectodomain shedding upon NK cell stimulation. The soluble form is produced by a proteolytic cleavage mediated by ADAM17. Repeated stimulation causes receptor shedding, a mechanism that allows for increased NK cell motility and detachment from opsonized target cells while avoiding activation-induced NK cell apoptosis. Lymphocytes and monocytes.

Its subcellular location is the cell membrane. The protein resides in the secreted. Functionally, receptor for the invariable Fc fragment of immunoglobulin gamma (IgG). Optimally activated upon binding of clustered antigen-IgG complexes displayed on cell surfaces, triggers lysis of antibody-coated cells, a process known as antibody-dependent cellular cytotoxicity (ADCC). Does not bind free monomeric IgG, thus avoiding inappropriate effector cell activation in the absence of antigenic trigger. Mediates IgG effector functions on natural killer (NK) cells. Binds antigen-IgG complexes generated upon infection and triggers NK cell-dependent cytokine production and degranulation to limit viral load and propagation. Involved in the generation of memory-like adaptive NK cells capable to produce high amounts of IFNG and to efficiently eliminate virus-infected cells via ADCC. Regulates NK cell survival and proliferation, in particular by preventing NK cell progenitor apoptosis. Fc-binding subunit that associates with CD247 and/or FCER1G adapters to form functional signaling complexes. Following the engagement of antigen-IgG complexes, triggers phosphorylation of immunoreceptor tyrosine-based activation motif (ITAM)-containing adapters with subsequent activation of phosphatidylinositol 3-kinase signaling and sustained elevation of intracellular calcium that ultimately drive NK cell activation. The ITAM-dependent signaling coupled to receptor phosphorylation by PKC mediates robust intracellular calcium flux that leads to production of pro-inflammatory cytokines, whereas in the absence of receptor phosphorylation it mainly activates phosphatidylinositol 3-kinase signaling leading to cell degranulation. Costimulates NK cells and trigger lysis of target cells independently of IgG binding. Mediates the antitumor activities of therapeutic antibodies. Upon ligation on monocytes triggers TNFA-dependent ADCC of IgG-coated tumor cells. Mediates enhanced ADCC in response to afucosylated IgGs. The chain is Low affinity immunoglobulin gamma Fc region receptor III-A (FCGR3A) from Macaca fascicularis (Crab-eating macaque).